Reading from the N-terminus, the 326-residue chain is (+)-T-muurolol synthase ((2E,6E)-farnesyl diphosphate cyclizing) (326 aa).

Aspartate 81 and aspartate 85 together coordinate Mg(2+). The short motif at 81-85 (DDQCD) is the DDXXD motif element. Arginine 175 provides a ligand contact to substrate. Residues asparagine 221 and serine 225 each contribute to the Mg(2+) site. Lysine 228 contacts substrate. Residue glutamate 229 participates in Mg(2+) binding. Residue 309-310 (RY) coordinates substrate.

The protein belongs to the terpene synthase family. Requires Mg(2+) as cofactor.

The catalysed reaction is (2E,6E)-farnesyl diphosphate + H2O = (+)-T-muurolol + diphosphate. It functions in the pathway secondary metabolite biosynthesis; terpenoid biosynthesis. Functionally, catalyzes the conversion of (2E,6E)-farnesyl diphosphate (FPP) into (+)-T-muurolol via a 1,10-cyclization, which requires isomerization of FPP to nerolidyl diphosphate (NPP) and then abstraction of the pyrophosphate from intermediate NPP leading to a (E,Z)-germacradienyl (helminthogermacradienyl) cation. The chain is (+)-T-muurolol synthase ((2E,6E)-farnesyl diphosphate cyclizing) from Roseiflexus castenholzii (strain DSM 13941 / HLO8).